A 165-amino-acid chain; its full sequence is MASDYSFDIVSEVNLPEVKNAVNQALKEISQRYDFKGSNVEIELNEKEKEIRITADDEYRLKRAVDVLEAKLVKRQVSLKFLDYGKIEPALGGTVKQTIKLKSGIPREKAKEIIDTIKQTKLKVQTQILDDKLRVSGKKKDDLQAVIKLLKEKEFGLVLQFTNYR.

Belongs to the YajQ family.

Its function is as follows. Nucleotide-binding protein. The polypeptide is Nucleotide-binding protein CHY_1197 (Carboxydothermus hydrogenoformans (strain ATCC BAA-161 / DSM 6008 / Z-2901)).